We begin with the raw amino-acid sequence, 109 residues long: Aquaporin-2 (109 aa).

Residues 1–6 lie on the Cytoplasmic side of the membrane; that stretch reads SVAFSR. Residues 7–27 form a helical membrane-spanning segment; that stretch reads AVFAEFLATLLFVFFGLGSAL. Residues 28–35 are Extracellular-facing; it reads NWPQALPS. Residues 36 to 54 traverse the membrane as a helical segment; it reads VLQIAMAFGLGIGTLVQAL. Residues 55-59 lie on the Cytoplasmic side of the membrane; it reads GHVSG. The discontinuously helical intramembrane region spans 60–69; the sequence is AHINPAVTVA. The NPA 1 signature appears at 63-65; that stretch reads NPA. At 70-80 the chain is on the cytoplasmic side; that stretch reads CLVGCHVSFLR. Residues 81–102 form a helical membrane-spanning segment; the sequence is AAFYVAAQLLGAVAGAALLHEI. The Extracellular portion of the chain corresponds to 103 to 109; that stretch reads TPPHVRG.

The protein belongs to the MIP/aquaporin (TC 1.A.8) family. As to quaternary structure, homotetramer. Post-translationally, serine phosphorylation is necessary and sufficient for expression at the apical membrane. Endocytosis is not phosphorylation-dependent. In terms of processing, N-glycosylated.

The protein localises to the apical cell membrane. It localises to the basolateral cell membrane. The protein resides in the cell membrane. Its subcellular location is the cytoplasmic vesicle membrane. It is found in the golgi apparatus. The protein localises to the trans-Golgi network membrane. It carries out the reaction H2O(in) = H2O(out). The catalysed reaction is glycerol(in) = glycerol(out). Its function is as follows. Forms a water-specific channel that provides the plasma membranes of renal collecting duct with high permeability to water, thereby permitting water to move in the direction of an osmotic gradient. Plays an essential role in renal water homeostasis. Could also be permeable to glycerol. The chain is Aquaporin-2 from Canis lupus familiaris (Dog).